A 51-amino-acid polypeptide reads, in one-letter code: Large ribosomal subunit protein eL39 (51 aa).

The protein belongs to the eukaryotic ribosomal protein eL39 family. Interacts with YIH1.

This chain is Large ribosomal subunit protein eL39 (RPL39), found in Kluyveromyces marxianus (Yeast).